We begin with the raw amino-acid sequence, 194 residues long: Peptidyl-tRNA hydrolase (194 aa).

Tyrosine 17 is a tRNA binding site. Residue histidine 22 is the Proton acceptor of the active site. TRNA is bound by residues tyrosine 68, asparagine 70, and asparagine 116.

Belongs to the PTH family. As to quaternary structure, monomer.

Its subcellular location is the cytoplasm. It catalyses the reaction an N-acyl-L-alpha-aminoacyl-tRNA + H2O = an N-acyl-L-amino acid + a tRNA + H(+). Hydrolyzes ribosome-free peptidyl-tRNAs (with 1 or more amino acids incorporated), which drop off the ribosome during protein synthesis, or as a result of ribosome stalling. Functionally, catalyzes the release of premature peptidyl moieties from peptidyl-tRNA molecules trapped in stalled 50S ribosomal subunits, and thus maintains levels of free tRNAs and 50S ribosomes. The protein is Peptidyl-tRNA hydrolase of Marinomonas sp. (strain MWYL1).